The following is a 121-amino-acid chain: Ribonuclease P protein component (121 aa).

This sequence belongs to the RnpA family. In terms of assembly, consists of a catalytic RNA component (M1 or rnpB) and a protein subunit.

It carries out the reaction Endonucleolytic cleavage of RNA, removing 5'-extranucleotides from tRNA precursor.. Its function is as follows. RNaseP catalyzes the removal of the 5'-leader sequence from pre-tRNA to produce the mature 5'-terminus. It can also cleave other RNA substrates such as 4.5S RNA. The protein component plays an auxiliary but essential role in vivo by binding to the 5'-leader sequence and broadening the substrate specificity of the ribozyme. This chain is Ribonuclease P protein component, found in Nitrosomonas eutropha (strain DSM 101675 / C91 / Nm57).